The chain runs to 322 residues: UPF0324 membrane protein BB4178 (322 aa).

Helical transmembrane passes span 13 to 35 (FIRQFGFSPLVVGIVCGMLYGNF), 50 to 69 (FTARRLLRIAVAFYGLNISI), 76 to 98 (GLPGLAVSVGVVASTLLIGTVAG), 108 to 127 (TAMLTAAGSAICGAAAVLAF), 139 to 161 (AVAVATVVLFGTLSMFLYPVIYH), 171 to 193 (ALGIYIGGTVHEVAQVVGAASNI), 209 to 231 (VALLVPVLLVLGFWLRASAAAGA), 241 to 260 (VPWFAIGFLVLAIVNSLDIL), 273 to 292 (VFVLTMAMTALGIETRFAQI), and 296 to 318 (GPRVMALGLVLYAWLVFGGYGIV).

It belongs to the UPF0324 family.

The protein resides in the cell membrane. This is UPF0324 membrane protein BB4178 from Bordetella bronchiseptica (strain ATCC BAA-588 / NCTC 13252 / RB50) (Alcaligenes bronchisepticus).